A 695-amino-acid polypeptide reads, in one-letter code: Elongation factor G (695 aa).

The tr-type G domain maps to 8–282 (EKTRNIGIMA…AVLDYLPAPT (275 aa)). GTP-binding positions include 17-24 (AHIDAGKT), 81-85 (DTPGH), and 135-138 (NKMD).

This sequence belongs to the TRAFAC class translation factor GTPase superfamily. Classic translation factor GTPase family. EF-G/EF-2 subfamily.

Its subcellular location is the cytoplasm. In terms of biological role, catalyzes the GTP-dependent ribosomal translocation step during translation elongation. During this step, the ribosome changes from the pre-translocational (PRE) to the post-translocational (POST) state as the newly formed A-site-bound peptidyl-tRNA and P-site-bound deacylated tRNA move to the P and E sites, respectively. Catalyzes the coordinated movement of the two tRNA molecules, the mRNA and conformational changes in the ribosome. This is Elongation factor G from Listeria welshimeri serovar 6b (strain ATCC 35897 / DSM 20650 / CCUG 15529 / CIP 8149 / NCTC 11857 / SLCC 5334 / V8).